A 308-amino-acid chain; its full sequence is Oxygen-dependent coproporphyrinogen-III oxidase (308 aa).

Position 100 (S100) interacts with substrate. Residues H104 and H114 each coordinate a divalent metal cation. H114 (proton donor) is an active-site residue. Residue N116–R118 participates in substrate binding. 2 residues coordinate a divalent metal cation: H153 and H183. The tract at residues Y248 to K283 is important for dimerization. G266 to R268 serves as a coordination point for substrate.

This sequence belongs to the aerobic coproporphyrinogen-III oxidase family. In terms of assembly, homodimer. It depends on a divalent metal cation as a cofactor.

The protein localises to the cytoplasm. The catalysed reaction is coproporphyrinogen III + O2 + 2 H(+) = protoporphyrinogen IX + 2 CO2 + 2 H2O. Its pathway is porphyrin-containing compound metabolism; protoporphyrin-IX biosynthesis; protoporphyrinogen-IX from coproporphyrinogen-III (O2 route): step 1/1. Functionally, involved in the heme biosynthesis. Catalyzes the aerobic oxidative decarboxylation of propionate groups of rings A and B of coproporphyrinogen-III to yield the vinyl groups in protoporphyrinogen-IX. The protein is Oxygen-dependent coproporphyrinogen-III oxidase of Francisella tularensis subsp. holarctica (strain LVS).